The following is a 234-amino-acid chain: Zinc finger FYVE domain-containing protein 21 (234 aa).

The segment at 44–104 (DKECRRCMQC…QCAECALVSL (61 aa)) adopts an FYVE-type zinc-finger fold. Zn(2+)-binding residues include Cys-50, Cys-53, Cys-66, Cys-69, Cys-74, Cys-77, Cys-96, and Cys-99. Positions 107–234 (AEFYDKQLKV…AKLLYESRDQ (128 aa)) are PH-like.

In terms of assembly, interacts with PTK2/FAK1.

Its subcellular location is the cell junction. It localises to the focal adhesion. The protein resides in the cytoplasmic vesicle. The protein localises to the endosome. In terms of biological role, plays a role in cell adhesion, and thereby in cell motility which requires repeated formation and disassembly of focal adhesions. Regulates microtubule-induced PTK2/FAK1 dephosphorylation, an event important for focal adhesion disassembly, as well as integrin beta-1/ITGB1 cell surface expression. The polypeptide is Zinc finger FYVE domain-containing protein 21 (ZFYVE21) (Homo sapiens (Human)).